Reading from the N-terminus, the 71-residue chain is DNA-directed RNA polymerase subunit epsilon (71 aa).

The protein belongs to the RNA polymerase subunit epsilon family. RNAP is composed of a core of 2 alpha, a beta and a beta' subunit. The core is associated with a delta subunit, and at least one of epsilon or omega. When a sigma factor is associated with the core the holoenzyme is formed, which can initiate transcription.

The enzyme catalyses RNA(n) + a ribonucleoside 5'-triphosphate = RNA(n+1) + diphosphate. Its function is as follows. A non-essential component of RNA polymerase (RNAP). The chain is DNA-directed RNA polymerase subunit epsilon from Staphylococcus saprophyticus subsp. saprophyticus (strain ATCC 15305 / DSM 20229 / NCIMB 8711 / NCTC 7292 / S-41).